Here is a 150-residue protein sequence, read N- to C-terminus: Alkaline nuclease (150 aa).

Belongs to the baculo-herpesviridae alkaline nuclease family.

The protein is Alkaline nuclease (UL12) of Suid herpesvirus 1 (strain NIA-3) (SuHV-1).